We begin with the raw amino-acid sequence, 85 residues long: UPF0512 protein R (85 aa).

It belongs to the UPF0512 family.

This is UPF0512 protein R from Dictyostelium discoideum (Social amoeba).